Reading from the N-terminus, the 992-residue chain is Vacuolar membrane protease (992 aa).

The Cytoplasmic portion of the chain corresponds to 1–24 (MSPAMANPRVRKFNPIAFTPLPVT). A helical transmembrane segment spans residues 25–45 (FITTIVYLAVLILVLVTYLVV). The Vacuolar portion of the chain corresponds to 46–390 (PPAPTLEMSP…SAFAVFRLHT (345 aa)). N-linked (GlcNAc...) asparagine glycosylation is found at Asn59, Asn115, and Asn118. His174 and Asp186 together coordinate Zn(2+). The Proton acceptor role is filled by Glu220. Glu221 contacts Zn(2+). Residue Asn237 is glycosylated (N-linked (GlcNAc...) asparagine). Positions 246 and 319 each coordinate Zn(2+). Residues 391–411 (LFALSVTLLVIGPLVLFITSI) form a helical membrane-spanning segment. The Cytoplasmic portion of the chain corresponds to 412 to 446 (ALSKTDRMYLFSMSKSLGGASETVSLRGLRGLFRT). The helical transmembrane segment at 447–467 (PIILTVTTVISIGLAYLLEKI) threads the bilayer. Topologically, residues 468 to 474 (NPYIVHS) are vacuolar. A helical transmembrane segment spans residues 475-495 (SQFAVWSMMLSVWIFVAWFLA). Residues 496–508 (RVADFFRPSALHR) are Cytoplasmic-facing. Residues 509–529 (AYSYTWIFIVTWIMLVISTVY) form a helical membrane-spanning segment. Residues 530–533 (ANQK) are Vacuolar-facing. A helical membrane pass occupies residues 534–554 (GIAAGYFTFFYFAAVFLATWV). The Cytoplasmic segment spans residues 555 to 671 (SYLELFSLPR…WSWTLPRWTW (117 aa)). A disordered region spans residues 579-620 (RSSSLSSRLLTPSADELPSDIGPNGAENVGDPDETDPTESTS). A helical transmembrane segment spans residues 672 to 692 (ILQLLLLAPIVIILVGQVGLL). Residues 693-708 (LTTAMSQIGSDGVSTF) lie on the Vacuolar side of the membrane. Residues 709–729 (IVYLACALFSTLLFAPLLPFI) form a helical membrane-spanning segment. The Cytoplasmic segment spans residues 730-736 (HRFTYHV). The helical transmembrane segment at 737–757 (PIFLLLIFIGTLIYNLVAFPF) threads the bilayer. At 758-992 (SPANRLKIFF…VEASHDFIIQ (235 aa)) the chain is on the vacuolar side. Asn805, Asn846, and Asn954 each carry an N-linked (GlcNAc...) asparagine glycan.

The protein belongs to the peptidase M28 family. Requires Zn(2+) as cofactor.

It localises to the vacuole membrane. May be involved in vacuolar sorting and osmoregulation. The polypeptide is Vacuolar membrane protease (Paracoccidioides brasiliensis (strain Pb18)).